We begin with the raw amino-acid sequence, 480 residues long: Cytochrome P450 724B1 (480 aa).

A helical membrane pass occupies residues 6–26 (LVLAALVILLALLLTLVLSHF). Residue Cys-426 participates in heme binding.

This sequence belongs to the cytochrome P450 family. Heme is required as a cofactor. As to expression, ubiquitously expressed at low levels, but preferentially in the internodes and the florets before flowering.

It localises to the membrane. The catalysed reaction is campesterol + reduced [NADPH--hemoprotein reductase] + O2 = (22S)-22-hydroxycampesterol + oxidized [NADPH--hemoprotein reductase] + H2O + H(+). It functions in the pathway plant hormone biosynthesis; brassinosteroid biosynthesis. Functionally, involved in brassinosteroid biosynthesis. May catalyze a C6-oxidation step and may be involved to supply 6-deoxotyphasterol and typhasterol. Involved in internode elongation and seed development. Catalyzes the conversion of campesterol (CR) to (22S)-22-hydroxycampesterol (22-OHCR, 22-hydroxyCR). The polypeptide is Cytochrome P450 724B1 (Oryza sativa subsp. japonica (Rice)).